The chain runs to 201 residues: Sec-independent protein translocase protein TatB (201 aa).

Residues 1-21 (MLDLGWSEILVIAVVLIVVVG) traverse the membrane as a helical segment. The disordered stretch occupies residues 96 to 201 (LSEAAKAKPA…RRKKTAGTAP (106 aa)). 2 stretches are compositionally biased toward low complexity: residues 102–114 (AKPA…AADS) and 159–187 (TSAK…APAK). Positions 189–201 (PSPRRKKTAGTAP) are enriched in basic residues.

Belongs to the TatB family. As to quaternary structure, the Tat system comprises two distinct complexes: a TatABC complex, containing multiple copies of TatA, TatB and TatC subunits, and a separate TatA complex, containing only TatA subunits. Substrates initially bind to the TatABC complex, which probably triggers association of the separate TatA complex to form the active translocon.

It is found in the cell inner membrane. Its function is as follows. Part of the twin-arginine translocation (Tat) system that transports large folded proteins containing a characteristic twin-arginine motif in their signal peptide across membranes. Together with TatC, TatB is part of a receptor directly interacting with Tat signal peptides. TatB may form an oligomeric binding site that transiently accommodates folded Tat precursor proteins before their translocation. The sequence is that of Sec-independent protein translocase protein TatB from Chelativorans sp. (strain BNC1).